Consider the following 218-residue polypeptide: MTQYNFIIDASAFEKGLGNIKRWCSDCTEAVTLNFYIPTFTLNELDFLQQRRKSFAARESLKFIDRLDDSKFANLKVFIEFPEVLDIILWSDVMEHNDSSGKINIAKLPKRLKNLLKSCIYKCYLEGNEGLHWFLISEDPQIREMAMQCNIPSCSIVDVDSILSKDMNDKSFRESEKFNNMMLKNGTKEESENGREIIRTNFNKTVYASRGTGELWSP.

The protein resides in the cytoplasm. Functionally, involved in nonsense-mediated decay of mRNAs containing premature stop codons. The polypeptide is Nonsense-mediated decay protein 4 (NMD4) (Saccharomyces cerevisiae (strain ATCC 204508 / S288c) (Baker's yeast)).